Reading from the N-terminus, the 184-residue chain is Peptide deformylase (184 aa).

Residues Cys111 and His154 each coordinate Fe cation. Glu155 is an active-site residue. His158 is a binding site for Fe cation.

It belongs to the polypeptide deformylase family. Fe(2+) is required as a cofactor.

The catalysed reaction is N-terminal N-formyl-L-methionyl-[peptide] + H2O = N-terminal L-methionyl-[peptide] + formate. In terms of biological role, removes the formyl group from the N-terminal Met of newly synthesized proteins. Requires at least a dipeptide for an efficient rate of reaction. N-terminal L-methionine is a prerequisite for activity but the enzyme has broad specificity at other positions. This Macrococcus caseolyticus (strain JCSC5402) (Macrococcoides caseolyticum) protein is Peptide deformylase.